We begin with the raw amino-acid sequence, 427 residues long: Histidinol dehydrogenase (427 aa).

Substrate is bound by residues Ser-232, Gln-254, and His-257. Gln-254 and His-257 together coordinate Zn(2+). Residues Glu-322 and His-323 each act as proton acceptor in the active site. Residues His-323, Asp-356, Glu-410, and His-415 each coordinate substrate. A Zn(2+)-binding site is contributed by Asp-356. His-415 is a binding site for Zn(2+).

The protein belongs to the histidinol dehydrogenase family. Zn(2+) is required as a cofactor.

It catalyses the reaction L-histidinol + 2 NAD(+) + H2O = L-histidine + 2 NADH + 3 H(+). It functions in the pathway amino-acid biosynthesis; L-histidine biosynthesis; L-histidine from 5-phospho-alpha-D-ribose 1-diphosphate: step 9/9. Functionally, catalyzes the sequential NAD-dependent oxidations of L-histidinol to L-histidinaldehyde and then to L-histidine. This is Histidinol dehydrogenase from Listeria monocytogenes serovar 1/2a (strain ATCC BAA-679 / EGD-e).